A 679-amino-acid chain; its full sequence is Kelch-like protein diablo (679 aa).

The span at 1 to 48 (MGDLPGGGGGAAGGAGAAGGGGGGGNGAAGSSSSGGGASGSGGGGPGS) shows a compositional bias: gly residues. A disordered region spans residues 1–84 (MGDLPGGGGG…RLSHTSEKHP (84 aa)). The BTB domain maps to 101-168 (CDVVLNVGGR…CYTAHIIVEE (68 aa)). The BACK domain occupies 203–305 (CLGIRAFADT…SPKFLVGTVG (103 aa)). Kelch repeat units follow at residues 352–398 (VLFA…VLND), 400–446 (LYAV…VLDG), 447–493 (FLYA…VLGG), 495–540 (LYAI…VFNN), 542–587 (IYAV…VVNG), and 588–634 (QLYA…VMRA). Positions 643–679 (CDNNSSNNNNNNYNLKHQQQQPQQQQQQQQQQTQQQL) are disordered. The segment covering 645 to 679 (NNSSNNNNNNYNLKHQQQQPQQQQQQQQQQTQQQL) has biased composition (low complexity).

The protein operates within protein modification; protein ubiquitination. Functionally, probable substrate-specific adapter of an E3 ubiquitin-protein ligase complex which mediates the ubiquitination and subsequent proteasomal degradation of target proteins. May have a role in synapse differentiation and growth. This is Kelch-like protein diablo from Drosophila willistoni (Fruit fly).